A 176-amino-acid polypeptide reads, in one-letter code: ATP synthase subunit delta (176 aa).

This sequence belongs to the ATPase delta chain family. As to quaternary structure, F-type ATPases have 2 components, F(1) - the catalytic core - and F(0) - the membrane proton channel. F(1) has five subunits: alpha(3), beta(3), gamma(1), delta(1), epsilon(1). F(0) has three main subunits: a(1), b(2) and c(10-14). The alpha and beta chains form an alternating ring which encloses part of the gamma chain. F(1) is attached to F(0) by a central stalk formed by the gamma and epsilon chains, while a peripheral stalk is formed by the delta and b chains.

The protein localises to the cell inner membrane. Its function is as follows. F(1)F(0) ATP synthase produces ATP from ADP in the presence of a proton or sodium gradient. F-type ATPases consist of two structural domains, F(1) containing the extramembraneous catalytic core and F(0) containing the membrane proton channel, linked together by a central stalk and a peripheral stalk. During catalysis, ATP synthesis in the catalytic domain of F(1) is coupled via a rotary mechanism of the central stalk subunits to proton translocation. This protein is part of the stalk that links CF(0) to CF(1). It either transmits conformational changes from CF(0) to CF(1) or is implicated in proton conduction. This is ATP synthase subunit delta from Aliarcobacter butzleri (strain RM4018) (Arcobacter butzleri).